Reading from the N-terminus, the 150-residue chain is Deoxyuridine 5'-triphosphate nucleotidohydrolase (150 aa).

Substrate contacts are provided by residues 69 to 71, asparagine 82, and 86 to 88; these read RSG and LID.

Belongs to the dUTPase family. It depends on Mg(2+) as a cofactor.

It carries out the reaction dUTP + H2O = dUMP + diphosphate + H(+). The protein operates within pyrimidine metabolism; dUMP biosynthesis; dUMP from dCTP (dUTP route): step 2/2. Functionally, this enzyme is involved in nucleotide metabolism: it produces dUMP, the immediate precursor of thymidine nucleotides and it decreases the intracellular concentration of dUTP so that uracil cannot be incorporated into DNA. The polypeptide is Deoxyuridine 5'-triphosphate nucleotidohydrolase (Methylobacillus flagellatus (strain ATCC 51484 / DSM 6875 / VKM B-1610 / KT)).